Here is a 636-residue protein sequence, read N- to C-terminus: MNEINVTLPDGSQRPLPAGASIFDLAASIGAGLAKAAIAGKIDGNLVDLNTPLADGARVEIVTEKSPEALEIIRHSTSHLMAQAVKALFPQAKVTIGPAIETGFYYDFDVDHPFTPEDLEKIEEKMRELAKADLKIERRELTSADAIALFKGMGEDYKVELIEDLGADKVSLYSQGDFVDLCRGPHLPKTSYIKAFKLTSIAGAYWRGDEKRAMLQRVYGTAFGDKKELEAYLARIEEAKKRDHRKLGRELDLFSFNDEVGAGLVIWHPKGAMLRTILEDFERKEHLKRGYDIVLGPQILKTELWQRSGHYENYRENMYFTTVDEQSYGVKPMNCLAHMMIYRSQLRSYRDLPLRYFELGTVHRHERAGVLHGLLRVRGFTQDDAHILCTPDQLDAEIKGVIQFVTEVMGIFGFEFEMELSTRPEKSIGSDDAWELATSALLNALKDSGRPYEINEGDGAFYGPKIDIKLRDALDRRWQCATIQCDFTLPERFDLTYVDADGEKKRPVMVHRVILGAIERFIGVLIEHFAGNFPTWLAPVQATIVTVTDNQIPYAQAAFDKLRAAGIRVQKDFRNEKLGFKIREAQLQKIPYMLVVGDKEVESGMLAPRFRDGKNLESMTPEQFITFIENEVKSYK.

One can recognise a TGS domain in the interval 1–63 (MNEINVTLPD…ADGARVEIVT (63 aa)). Residues 243–534 (DHRKLGRELD…LIEHFAGNFP (292 aa)) are catalytic. Zn(2+) contacts are provided by cysteine 335, histidine 386, and histidine 511.

Belongs to the class-II aminoacyl-tRNA synthetase family. In terms of assembly, homodimer. It depends on Zn(2+) as a cofactor.

It localises to the cytoplasm. It carries out the reaction tRNA(Thr) + L-threonine + ATP = L-threonyl-tRNA(Thr) + AMP + diphosphate + H(+). In terms of biological role, catalyzes the attachment of threonine to tRNA(Thr) in a two-step reaction: L-threonine is first activated by ATP to form Thr-AMP and then transferred to the acceptor end of tRNA(Thr). Also edits incorrectly charged L-seryl-tRNA(Thr). The protein is Threonine--tRNA ligase of Geobacter sp. (strain M21).